The following is a 1152-amino-acid chain: Autotransporter adhesin BpaC (1152 aa).

The signal sequence occupies residues 1-71 (MNRIFKSIWC…PFAEEAMAAN (71 aa)). Positions 72–1061 (NAGVCLTYNG…VGQLNSAVSG (990 aa)) are surface exposed passenger domain. Disordered regions lie at residues 420 to 886 (GLQG…AGAT) and 900 to 949 (TATG…ESAA). Over residues 427–442 (ANTGTASGDNSTASGD) the composition is skewed to polar residues. Over residues 443–504 (NATASGTNST…ANGTNSTASG (62 aa)) the composition is skewed to low complexity. The span at 505–519 (DNSTASGTNASATGE) shows a compositional bias: polar residues. Low complexity predominate over residues 520-588 (NSTATGTDST…ANGTNSTASG (69 aa)). Polar residues predominate over residues 589–603 (DNSTASGTNASATGE). Positions 604 to 630 (NSTATGTDSTASGSNSTANGTNSTASG) are enriched in low complexity. Over residues 631–645 (DNSTASGTNASATGE) the composition is skewed to polar residues. Residues 646 to 672 (NSTATGTDSTASGSNSTANGTNSTASG) show a composition bias toward low complexity. The segment covering 673–687 (DNSTASGTNASATGE) has biased composition (polar residues). Residues 688–714 (NSTATGTDSTASGSNSTANGTNSTASG) are compositionally biased toward low complexity. The segment covering 715–729 (DNSTASGTNASATGE) has biased composition (polar residues). Positions 730 to 756 (NSTATGTDSTASGSNSTANGANSTASG) are enriched in low complexity. Positions 757–771 (DNSTASGTNASATGE) are enriched in polar residues. 2 stretches are compositionally biased toward low complexity: residues 772–840 (NSTA…TASG) and 848–886 (TNAS…AGAT). An outer membrane translocation of the passenger domain region spans residues 1062–1099 (IRNQMDGMQGQIDTLARDAYSGIAAATALTMIPDVDPG). Residues 1100–1152 (KTLAVGIGTANFKGYQASALGATARITQNLKVKTGVSYSGSNYVWGAGMSYQW) are translocator domain.

The protein belongs to the autotransporter-2 (AT-2) (TC 1.B.40) family. In terms of assembly, homotrimer.

The protein resides in the cell surface. It localises to the cell outer membrane. In terms of biological role, involved in virulence. Mediates adherence to human respiratory epithelial cells. The protein is Autotransporter adhesin BpaC of Burkholderia pseudomallei (strain 1026b).